Here is a 245-residue protein sequence, read N- to C-terminus: 5-oxoprolinase subunit A (245 aa).

The protein belongs to the LamB/PxpA family. In terms of assembly, forms a complex composed of PxpA, PxpB and PxpC.

It catalyses the reaction 5-oxo-L-proline + ATP + 2 H2O = L-glutamate + ADP + phosphate + H(+). In terms of biological role, catalyzes the cleavage of 5-oxoproline to form L-glutamate coupled to the hydrolysis of ATP to ADP and inorganic phosphate. This is 5-oxoprolinase subunit A from Haemophilus influenzae (strain 86-028NP).